Consider the following 252-residue polypeptide: Triosephosphate isomerase (252 aa).

9–11 serves as a coordination point for substrate; the sequence is NWK. Histidine 95 functions as the Electrophile in the catalytic mechanism. Glutamate 167 acts as the Proton acceptor in catalysis. Residues glycine 173, serine 213, and 234–235 contribute to the substrate site; that span reads GG.

This sequence belongs to the triosephosphate isomerase family. As to quaternary structure, homodimer.

It localises to the cytoplasm. It carries out the reaction D-glyceraldehyde 3-phosphate = dihydroxyacetone phosphate. It participates in carbohydrate biosynthesis; gluconeogenesis. Its pathway is carbohydrate degradation; glycolysis; D-glyceraldehyde 3-phosphate from glycerone phosphate: step 1/1. Functionally, involved in the gluconeogenesis. Catalyzes stereospecifically the conversion of dihydroxyacetone phosphate (DHAP) to D-glyceraldehyde-3-phosphate (G3P). The polypeptide is Triosephosphate isomerase (Syntrophotalea carbinolica (strain DSM 2380 / NBRC 103641 / GraBd1) (Pelobacter carbinolicus)).